The sequence spans 529 residues: Bifunctional purine biosynthesis protein PurH (529 aa).

The MGS-like domain occupies 1-148 (MNNARPIRRA…KNHKDTTIIV (148 aa)).

The protein belongs to the PurH family.

The enzyme catalyses (6R)-10-formyltetrahydrofolate + 5-amino-1-(5-phospho-beta-D-ribosyl)imidazole-4-carboxamide = 5-formamido-1-(5-phospho-D-ribosyl)imidazole-4-carboxamide + (6S)-5,6,7,8-tetrahydrofolate. The catalysed reaction is IMP + H2O = 5-formamido-1-(5-phospho-D-ribosyl)imidazole-4-carboxamide. Its pathway is purine metabolism; IMP biosynthesis via de novo pathway; 5-formamido-1-(5-phospho-D-ribosyl)imidazole-4-carboxamide from 5-amino-1-(5-phospho-D-ribosyl)imidazole-4-carboxamide (10-formyl THF route): step 1/1. The protein operates within purine metabolism; IMP biosynthesis via de novo pathway; IMP from 5-formamido-1-(5-phospho-D-ribosyl)imidazole-4-carboxamide: step 1/1. This Shewanella piezotolerans (strain WP3 / JCM 13877) protein is Bifunctional purine biosynthesis protein PurH.